A 311-amino-acid polypeptide reads, in one-letter code: MQENQQITKKEQYNLNKLQKRLRRNVGEAIADFNMIEEGDRIMVCLSGGKDSYTMLEILRNLQQSAPINFSLVAVNLDQKQPGFPEHVLLEYLEKLGVEYKIVEENTYGIVKEKIPEGKTTCSLCSRLRRGILYRTATELGATKIALGHHRDDILQTLFLNMFYGGKMKGMPPKLMSDDGKHIVIRPLAYCREKDIQRFADAKAFPIIPCNLCGSQPNLQRQVIADMLRDWDKRYPGRIETMFSAMQNVVPSHLCDSNLFDFKGITHGSEVVNGGDLAFDREEIPLQPAGWQPEEDENQLDELRLNVVEVK.

The short motif at 47 to 52 (SGGKDS) is the PP-loop motif element. Cys122, Cys125, and Cys213 together coordinate [4Fe-4S] cluster.

It belongs to the TtcA family. In terms of assembly, homodimer. It depends on Mg(2+) as a cofactor. Requires [4Fe-4S] cluster as cofactor.

It is found in the cytoplasm. The catalysed reaction is cytidine(32) in tRNA + S-sulfanyl-L-cysteinyl-[cysteine desulfurase] + AH2 + ATP = 2-thiocytidine(32) in tRNA + L-cysteinyl-[cysteine desulfurase] + A + AMP + diphosphate + H(+). It functions in the pathway tRNA modification. Catalyzes the ATP-dependent 2-thiolation of cytidine in position 32 of tRNA, to form 2-thiocytidine (s(2)C32). The sulfur atoms are provided by the cysteine/cysteine desulfurase (IscS) system. The polypeptide is tRNA-cytidine(32) 2-sulfurtransferase (Shigella dysenteriae serotype 1 (strain Sd197)).